Consider the following 840-residue polypeptide: MDRVLRDVFDYSYRDYILSWYGNLSRDDGQLYHLLLDDFWEIVKQIRQRLSHVDVVKVVCNDIVKALLTHFCDLKAATARHEEQPRPFVLHACLKDSHDEVRFLQTCSQVLVLCLLPSKDIQSLSLRTMLAEILTTKVLKPVVELLSNPDYINQMLLRQLEYREQMSEHHKRAYTYAPSYEDFIKLINSNSDVDFLKQLRYQIVVEIIQATTISSFPQLKRHKGKESAAMKTDLLRARNMKRYINQLTVAKKQCEKRIRILGGPAYDQQEDGASDEGEGPQSQKILQFEDIMTNPFYRERFGTYMERIDKRALVGFWESAEHLKNANKSEIPQLVSEMYQNFFVESKEISVEKSLYKEIQQCLVGNRGIEVFSKIQADVSEVLRERYYPSFLVSDLYEKLMREEEEEEPDAQLASEKDELGSGGEAGEEAVEGTSGVSDPASFAVIKLRELNEKLEYKRQALSSIQNAPKPDKKIISKLKDEILLIEKECTALQLHMARTDWWCENLGLWRASITSAEVTEENGEQMPCYFVRVNLQEVGGVETKNWTVPRRLSEFQNLHRKLSECVPSLKKVQLPSLSKLPFKSIDHKFLGKSRNQLNAFLQNLLSDERLFQSEALYAFLSPSPDYLKVIDVQGKKTSFSLSSFLEKLPRDFFSHQEEEIEEDSDLSDYGDDVDGKKDSLAEPCFMLIGEIFELRGMFKWVRRTLIALVQVTFGRTINKQIRDTVSWISSEQMLVYYISAFRDAFWPNGKLAPPTRIRSVAQSQETKQRAQQKLLENIPDTLQSLVGQQNARHGIIKIFKALQETKANKHLLYVLMELLLTELCPELRAHLDQFKAGQV.

The PXA domain occupies 1–164 (MDRVLRDVFD…MLLRQLEYRE (164 aa)). One can recognise an RGS domain in the interval 287–401 (QFEDIMTNPF…LVSDLYEKLM (115 aa)). Residues 404–437 (EEEEEPDAQLASEKDELGSGGEAGEEAVEGTSGV) are disordered. Residues 446–494 (IKLRELNEKLEYKRQALSSIQNAPKPDKKIISKLKDEILLIEKECTALQ) are a coiled coil. One can recognise a PX domain in the interval 508-628 (GLWRASITSA…AFLSPSPDYL (121 aa)). A Phosphoserine modification is found at S665.

It belongs to the sorting nexin family.

The protein resides in the endosome membrane. Its function is as follows. May be involved in several stages of intracellular trafficking. In Mus musculus (Mouse), this protein is Sorting nexin-25 (Snx25).